A 327-amino-acid chain; its full sequence is Phenylalanine--tRNA ligase alpha subunit (327 aa).

E252 serves as a coordination point for Mg(2+).

The protein belongs to the class-II aminoacyl-tRNA synthetase family. Phe-tRNA synthetase alpha subunit type 1 subfamily. Tetramer of two alpha and two beta subunits. Mg(2+) serves as cofactor.

The protein localises to the cytoplasm. It catalyses the reaction tRNA(Phe) + L-phenylalanine + ATP = L-phenylalanyl-tRNA(Phe) + AMP + diphosphate + H(+). The sequence is that of Phenylalanine--tRNA ligase alpha subunit from Shewanella woodyi (strain ATCC 51908 / MS32).